Here is a 133-residue protein sequence, read N- to C-terminus: Putative esterase TV1331 (133 aa).

The protein belongs to the thioesterase PaaI family.

The polypeptide is Putative esterase TV1331 (Thermoplasma volcanium (strain ATCC 51530 / DSM 4299 / JCM 9571 / NBRC 15438 / GSS1)).